Reading from the N-terminus, the 461-residue chain is tRNA modification GTPase MnmE (461 aa).

Residues R27, E89, and R128 each coordinate (6S)-5-formyl-5,6,7,8-tetrahydrofolate. The region spanning 224 to 382 is the TrmE-type G domain; the sequence is GLATAIVGRP…LEELINKLFF (159 aa). N234 lines the K(+) pocket. Residues 234 to 239, 253 to 259, and 278 to 281 each bind GTP; these read NVGKSS, TDVAGTT, and DTAG. A Mg(2+)-binding site is contributed by S238. K(+) is bound by residues T253, V255, and T258. A Mg(2+)-binding site is contributed by T259. A (6S)-5-formyl-5,6,7,8-tetrahydrofolate-binding site is contributed by K461.

It belongs to the TRAFAC class TrmE-Era-EngA-EngB-Septin-like GTPase superfamily. TrmE GTPase family. In terms of assembly, homodimer. Heterotetramer of two MnmE and two MnmG subunits. K(+) is required as a cofactor.

It localises to the cytoplasm. In terms of biological role, exhibits a very high intrinsic GTPase hydrolysis rate. Involved in the addition of a carboxymethylaminomethyl (cmnm) group at the wobble position (U34) of certain tRNAs, forming tRNA-cmnm(5)s(2)U34. This chain is tRNA modification GTPase MnmE, found in Lactobacillus helveticus (strain DPC 4571).